The following is a 276-amino-acid chain: CASP-like protein 4A3 (276 aa).

The segment covering methionine 1 to lysine 13 has biased composition (polar residues). The disordered stretch occupies residues methionine 1–proline 76. Residues methionine 1–lysine 126 are Cytoplasmic-facing. Over residues serine 43 to glutamate 72 the composition is skewed to basic and acidic residues. The helical transmembrane segment at phenylalanine 127–methionine 147 threads the bilayer. Over alanine 148–arginine 167 the chain is Extracellular. Residues phenylalanine 168–alanine 188 traverse the membrane as a helical segment. The Cytoplasmic segment spans residues tyrosine 189–leucine 205. A helical transmembrane segment spans residues phenylalanine 206–valine 226. Residues threonine 227 to methionine 244 lie on the Extracellular side of the membrane. A helical transmembrane segment spans residues alanine 245–isoleucine 265. Residues serine 266–leucine 276 are Cytoplasmic-facing.

It belongs to the Casparian strip membrane proteins (CASP) family. In terms of assembly, homodimer and heterodimers.

It is found in the cell membrane. The protein is CASP-like protein 4A3 of Arabidopsis lyrata subsp. lyrata (Lyre-leaved rock-cress).